The chain runs to 434 residues: Nicotinate phosphoribosyltransferase (434 aa).

Residue H242 is modified to Phosphohistidine; by autocatalysis.

It belongs to the NAPRTase family. In terms of processing, transiently phosphorylated on a His residue during the reaction cycle. Phosphorylation strongly increases the affinity for substrates and increases the rate of nicotinate D-ribonucleotide production. Dephosphorylation regenerates the low-affinity form of the enzyme, leading to product release.

It carries out the reaction nicotinate + 5-phospho-alpha-D-ribose 1-diphosphate + ATP + H2O = nicotinate beta-D-ribonucleotide + ADP + phosphate + diphosphate. It functions in the pathway cofactor biosynthesis; NAD(+) biosynthesis; nicotinate D-ribonucleotide from nicotinate: step 1/1. Catalyzes the synthesis of beta-nicotinate D-ribonucleotide from nicotinate and 5-phospho-D-ribose 1-phosphate at the expense of ATP. This chain is Nicotinate phosphoribosyltransferase, found in Allorhizobium ampelinum (strain ATCC BAA-846 / DSM 112012 / S4) (Agrobacterium vitis (strain S4)).